We begin with the raw amino-acid sequence, 532 residues long: MRINTLSLFSLVSLVPTLALASLSGSVGPLTSASTKAATKTCNVLDYGAKADKTTDLGPPLASAFADCKSGGLVYVPSGDYALSTWAKLSGGKAWALQIDGTIYRTGTDGGNMIFIEHSSDFELFSSTSSGAMQGLGYEYHKDNKWSGPRLLRLYDVTDFSVHDFILVDAPAFHFSLDTCTNGEVYNMAIRGGNHGGLDGVDVWSTNVWIHDIEVTNKDECVTVKSPSKNILVENIYCNWSGGCGMGSLGKDTDISDITYRNIYTWNSNNMMFIKSNGGSGSATNLLFENFIGHGNAYSFDIDSYWASMSSQGGNGVELSNITLRNWKGTEENGASRGPIKIVCPDGAPCYDITIEDFAMWTEDSSRQRQWYSCRNAYGTGFCLKSGSNHVAYEATTTTVSSAPSGYSAATMAADLKTDFGITASIPIPTIPTSFYPGATPYSALMANKGSTAKVRAVVAPSKPTTVAAATSTPAEQQTSTSTPAPAVEQPSQQSPGQSAGEVGGCPFGNGRSVPTGPPRAGHRHHQRHGHH.

The first 21 residues, 1-21 (MRINTLSLFSLVSLVPTLALA), serve as a signal peptide directing secretion. A disulfide bridge connects residues Cys-42 and Cys-68. Catalysis depends on Asp-219, which acts as the Proton donor. A disulfide bridge links Cys-221 with Cys-238. The N-linked (GlcNAc...) asparagine glycan is linked to Asn-239. His-294 is an active-site residue. An N-linked (GlcNAc...) asparagine glycan is attached at Asn-321. Disulfide bonds link Cys-344–Cys-350 and Cys-374–Cys-383. Low complexity-rich tracts occupy residues 466–475 (TVAAATSTPA) and 490–499 (QPSQQSPGQS). The disordered stretch occupies residues 466-532 (TVAAATSTPA…HRHHQRHGHH (67 aa)). The span at 521 to 532 (AGHRHHQRHGHH) shows a compositional bias: basic residues.

It belongs to the glycosyl hydrolase 28 family.

Its subcellular location is the secreted. The enzyme catalyses Endohydrolysis of alpha-D-GalA-(1-&gt;2)-alpha-L-Rha glycosidic bond in the rhamnogalacturonan I backbone with initial inversion of anomeric configuration releasing oligosaccharides with beta-D-GalA at the reducing end.. In terms of biological role, pectinolytic enzymes consist of four classes of enzymes: pectine lyase, polygalacturonase, pectin methylesterase and rhamnogalacturonase. Hydrolyzes alpha-D-galacturonopyranosyl-(1,2)-alpha-L-rhamnopyranosyl linkages in the backbone of the hairy regions of pectins. This chain is Probable rhamnogalacturonase B (rhgB), found in Aspergillus oryzae (strain ATCC 42149 / RIB 40) (Yellow koji mold).